The primary structure comprises 238 residues: Ubiquinone biosynthesis O-methyltransferase (238 aa).

4 residues coordinate S-adenosyl-L-methionine: Arg40, Gly59, Asp81, and Met126.

This sequence belongs to the methyltransferase superfamily. UbiG/COQ3 family.

The catalysed reaction is a 3-demethylubiquinol + S-adenosyl-L-methionine = a ubiquinol + S-adenosyl-L-homocysteine + H(+). It carries out the reaction a 3-(all-trans-polyprenyl)benzene-1,2-diol + S-adenosyl-L-methionine = a 2-methoxy-6-(all-trans-polyprenyl)phenol + S-adenosyl-L-homocysteine + H(+). It functions in the pathway cofactor biosynthesis; ubiquinone biosynthesis. Functionally, O-methyltransferase that catalyzes the 2 O-methylation steps in the ubiquinone biosynthetic pathway. The polypeptide is Ubiquinone biosynthesis O-methyltransferase (Neisseria meningitidis serogroup A / serotype 4A (strain DSM 15465 / Z2491)).